Consider the following 159-residue polypeptide: Cyclic pyranopterin monophosphate synthase (159 aa).

Substrate is bound by residues 75–77 (LCH) and 113–114 (ME). Asp128 is a catalytic residue.

It belongs to the MoaC family. In terms of assembly, homohexamer; trimer of dimers.

It catalyses the reaction (8S)-3',8-cyclo-7,8-dihydroguanosine 5'-triphosphate = cyclic pyranopterin phosphate + diphosphate. It functions in the pathway cofactor biosynthesis; molybdopterin biosynthesis. In terms of biological role, catalyzes the conversion of (8S)-3',8-cyclo-7,8-dihydroguanosine 5'-triphosphate to cyclic pyranopterin monophosphate (cPMP). The protein is Cyclic pyranopterin monophosphate synthase of Burkholderia multivorans (strain ATCC 17616 / 249).